Reading from the N-terminus, the 83-residue chain is uncharacterized protein (83 aa).

The protein belongs to the BolA/IbaG family.

This is an uncharacterized protein from Acinetobacter guillouiae (Acinetobacter genomosp. 11).